A 433-amino-acid polypeptide reads, in one-letter code: 23S rRNA (uracil(1939)-C(5))-methyltransferase RlmD (433 aa).

The 59-residue stretch at 10-68 (RTTTRQIITVSVNDLDSFGQGVARHNGKTLFIPGLLSQENAEVTVTEDKKQYARAKVVR) folds into the TRAM domain. Cysteine 81, cysteine 87, cysteine 90, and cysteine 162 together coordinate [4Fe-4S] cluster. Residues glutamine 265, phenylalanine 294, asparagine 299, glutamate 315, asparagine 342, and aspartate 363 each contribute to the S-adenosyl-L-methionine site. The active-site Nucleophile is cysteine 389.

Belongs to the class I-like SAM-binding methyltransferase superfamily. RNA M5U methyltransferase family. RlmD subfamily.

It carries out the reaction uridine(1939) in 23S rRNA + S-adenosyl-L-methionine = 5-methyluridine(1939) in 23S rRNA + S-adenosyl-L-homocysteine + H(+). Its function is as follows. Catalyzes the formation of 5-methyl-uridine at position 1939 (m5U1939) in 23S rRNA. This Shigella dysenteriae serotype 1 (strain Sd197) protein is 23S rRNA (uracil(1939)-C(5))-methyltransferase RlmD.